The primary structure comprises 273 residues: MHTRTVFFISDGTGITAETFGNAVLAQFEMKPRHVRLPFTDTVDKAHQAVRQINHTAELEGVRPIVFTTLANMEVLEVIETGCKGMLLDMFGTFVRPLEIELAVKSNHRIGRFSDVSKSKEYDARIAAIDFSLAHDDGQSNRDLEGADVILVGVSRSGKTPTSLYLAMQHGLKAANYPLIPEDFERKQLPPALMPHRKKIFGLTIQPERLSQIRNERRPDSRYASLENCRNEVSEAEAMMRRAGIRWLSTTTKSIEEIATTILQELKPERLVY.

153-160 contacts ADP; it reads GVSRSGKT.

This sequence belongs to the pyruvate, phosphate/water dikinase regulatory protein family. PSRP subfamily.

It carries out the reaction [pyruvate, water dikinase] + ADP = [pyruvate, water dikinase]-phosphate + AMP + H(+). The enzyme catalyses [pyruvate, water dikinase]-phosphate + phosphate + H(+) = [pyruvate, water dikinase] + diphosphate. Bifunctional serine/threonine kinase and phosphorylase involved in the regulation of the phosphoenolpyruvate synthase (PEPS) by catalyzing its phosphorylation/dephosphorylation. The chain is Putative phosphoenolpyruvate synthase regulatory protein from Variovorax paradoxus (strain S110).